A 173-amino-acid polypeptide reads, in one-letter code: Crossover junction endodeoxyribonuclease RuvC (173 aa).

Active-site residues include Asp-8, Glu-67, and Asp-139. Residues Asp-8, Glu-67, and Asp-139 each coordinate Mg(2+).

This sequence belongs to the RuvC family. In terms of assembly, homodimer which binds Holliday junction (HJ) DNA. The HJ becomes 2-fold symmetrical on binding to RuvC with unstacked arms; it has a different conformation from HJ DNA in complex with RuvA. In the full resolvosome a probable DNA-RuvA(4)-RuvB(12)-RuvC(2) complex forms which resolves the HJ. Mg(2+) is required as a cofactor.

The protein localises to the cytoplasm. The enzyme catalyses Endonucleolytic cleavage at a junction such as a reciprocal single-stranded crossover between two homologous DNA duplexes (Holliday junction).. Its function is as follows. The RuvA-RuvB-RuvC complex processes Holliday junction (HJ) DNA during genetic recombination and DNA repair. Endonuclease that resolves HJ intermediates. Cleaves cruciform DNA by making single-stranded nicks across the HJ at symmetrical positions within the homologous arms, yielding a 5'-phosphate and a 3'-hydroxyl group; requires a central core of homology in the junction. The consensus cleavage sequence is 5'-(A/T)TT(C/G)-3'. Cleavage occurs on the 3'-side of the TT dinucleotide at the point of strand exchange. HJ branch migration catalyzed by RuvA-RuvB allows RuvC to scan DNA until it finds its consensus sequence, where it cleaves and resolves the cruciform DNA. This chain is Crossover junction endodeoxyribonuclease RuvC, found in Vibrio cholerae serotype O1 (strain ATCC 39541 / Classical Ogawa 395 / O395).